The sequence spans 567 residues: MAKYVIGSAWPYVQTVPHLGNLIGSVLSADVYARYLRFRGHDVVFVSGSDMHGTPIEVEAIQLGVDPEEYAKKMHQIVAELFKRWDISFDLYTHTHSDTHIKFVQNFFLKIYNNGYIFTKEEEVPYCPRDKIYLPDRFIIGKCPYCGYERARGDQCENCGRLLDPKQLIEPRCAICGSRPEWRITKHWYLDLRKLEDRIRKYVEENPHLPPNAKEMSLGMLKEGLKPRAITRDNKWGIPAPFPGAEGKTIYVWFEAVLGYISAVVELFREDAGKWERYWKDPETKIVFFVGKDNIPFHVIILPALLLANGEGYTLPTTTASTEYLLYEGDKFSKSRRWGIWIDEALQLMPPDYWRFILIYIRPENRDTSFTWALALEIINKIMNDDVGNYINRVLTFIKNRMGGVVPPPGAPTREDEEFINRVIQLFKKAEKHYDAIELKDALHTVVEIAREGNRYLNARAPWELLRRDIEVANAVMYRAYWSLKTIAAGLTPVTPRSAAELWKMLGISQPSWDEAYKPPTPGTPLGDVRPLFRKFTEEEVKDMLKKLEELRSQRASKKYPWEQVLL.

The short motif at 11–21 is the 'HIGH' region element; sequence PYVQTVPHLGN. Zn(2+) is bound by residues cysteine 143, cysteine 146, cysteine 156, and cysteine 159. The 'KMSKS' region signature appears at 331–335; it reads KFSKS. Lysine 334 is an ATP binding site.

The protein belongs to the class-I aminoacyl-tRNA synthetase family. MetG type 1 subfamily. Zn(2+) serves as cofactor.

Its subcellular location is the cytoplasm. The enzyme catalyses tRNA(Met) + L-methionine + ATP = L-methionyl-tRNA(Met) + AMP + diphosphate. Is required not only for elongation of protein synthesis but also for the initiation of all mRNA translation through initiator tRNA(fMet) aminoacylation. In Pyrobaculum islandicum (strain DSM 4184 / JCM 9189 / GEO3), this protein is Methionine--tRNA ligase.